The sequence spans 222 residues: Cyclin-dependent kinase inhibitor 3 (222 aa).

Residues 68 to 101 are disordered; sequence KPSSLIEPKQPPRVHRSGIKESGSRSRVDSVNSV. A compositionally biased stretch (basic and acidic residues) spans 85–95; that stretch reads GIKESGSRSRV.

It belongs to the CDI family. ICK/KRP subfamily. As to quaternary structure, specifically interacts with CDKA-1, but not with CDKB1-1.

The protein resides in the nucleus. Its subcellular location is the nucleoplasm. In terms of biological role, binds and inhibits CYCD2-1/CDKA-1 complex kinase activity. May target specifically CDKA-1. This Arabidopsis thaliana (Mouse-ear cress) protein is Cyclin-dependent kinase inhibitor 3 (KRP3).